The following is a 240-amino-acid chain: Tetrahydromethanopterin S-methyltransferase subunit A (240 aa).

Residues 1 to 218 lie on the Cytoplasmic side of the membrane; the sequence is MVDKKEPASG…KFHSGVHAGK (218 aa). Residue H85 coordinates 5-hydroxybenzimidazolylcob(I)amide. Residues 219 to 239 traverse the membrane as a helical segment; it reads IEGAMIGLTVTISLLGLLLLG. Position 240 (R240) is a topological domain, extracellular.

It belongs to the MtrA family. The complex is composed of 8 subunits; MtrA, MtrB, MtrC, MtrD, MtrE, MtrF, MtrG and MtrH. The cofactor is 5-hydroxybenzimidazolylcob(I)amide.

The protein localises to the cell membrane. It carries out the reaction 5-methyl-5,6,7,8-tetrahydromethanopterin + coenzyme M + 2 Na(+)(in) = 5,6,7,8-tetrahydromethanopterin + methyl-coenzyme M + 2 Na(+)(out). Its pathway is one-carbon metabolism; methanogenesis from CO(2); methyl-coenzyme M from 5,10-methylene-5,6,7,8-tetrahydromethanopterin: step 2/2. Its function is as follows. Part of a complex that catalyzes the formation of methyl-coenzyme M and tetrahydromethanopterin from coenzyme M and methyl-tetrahydromethanopterin. This is an energy-conserving, sodium-ion translocating step. The protein is Tetrahydromethanopterin S-methyltransferase subunit A of Methanosarcina acetivorans (strain ATCC 35395 / DSM 2834 / JCM 12185 / C2A).